Consider the following 252-residue polypeptide: Uracil-DNA glycosylase (252 aa).

The Proton acceptor role is filled by D87.

It belongs to the uracil-DNA glycosylase (UDG) superfamily. UNG family.

The protein localises to the host nucleus. It carries out the reaction Hydrolyzes single-stranded DNA or mismatched double-stranded DNA and polynucleotides, releasing free uracil.. Excises uracil residues from the DNA which can arise as a result of misincorporation of dUMP residues by DNA polymerase or deamination of cytosines. Therefore may reduce deleterious uracil incorporation into the viral genome, particularly in terminally differentiated cells which lack DNA repair enzymes. The sequence is that of Uracil-DNA glycosylase (46) from Saimiri sciureus (Common squirrel monkey).